The primary structure comprises 278 residues: Large ribosomal subunit protein uL2c (278 aa).

A disordered region spans residues 224-267 (VVMNPVDHPHGGGEGRAPIGRKKPLTPWGHTALGGRSRKNHKYS).

Belongs to the universal ribosomal protein uL2 family. Part of the 50S ribosomal subunit.

Its subcellular location is the plastid. The protein resides in the chloroplast. This Huperzia lucidula (Shining clubmoss) protein is Large ribosomal subunit protein uL2c (rpl2).